The following is a 490-amino-acid chain: N-succinylglutamate 5-semialdehyde dehydrogenase (490 aa).

220 to 225 (GSANTG) provides a ligand contact to NAD(+). Catalysis depends on residues E243 and C277.

The protein belongs to the aldehyde dehydrogenase family. AstD subfamily.

The enzyme catalyses N-succinyl-L-glutamate 5-semialdehyde + NAD(+) + H2O = N-succinyl-L-glutamate + NADH + 2 H(+). The protein operates within amino-acid degradation; L-arginine degradation via AST pathway; L-glutamate and succinate from L-arginine: step 4/5. In terms of biological role, catalyzes the NAD-dependent reduction of succinylglutamate semialdehyde into succinylglutamate. This is N-succinylglutamate 5-semialdehyde dehydrogenase from Shigella dysenteriae serotype 1 (strain Sd197).